Consider the following 410-residue polypeptide: Protein CNPPD1 (410 aa).

Residues 233-253 (CLLAVAYVSSVALAVASVAVI) form a helical membrane-spanning segment.

It belongs to the CNPPD1 family.

It is found in the membrane. In Pongo abelii (Sumatran orangutan), this protein is Protein CNPPD1 (CNPPD1).